The following is a 465-amino-acid chain: Mothers against decapentaplegic homolog 1 (465 aa).

An N-acetylmethionine modification is found at M1. Residues 12–136 form the MH1 domain; that stretch reads PAVKRLLGWK…YKRVESPVLP (125 aa). The Zn(2+) site is built by C64, C109, C121, and H126. The interval 162-248 is disordered; that stretch reads NEPHMPLNAT…SQPMDTNMMA (87 aa). A compositionally biased stretch (low complexity) spans 179 to 210; it reads PNSHPFPHSPNSSYPNSPGSSSSTYPHSPTSS. The span at 221-232 shows a compositional bias: pro residues; sequence DTPPPAYLPPED. The MH2 domain maps to 271-465; sequence WCSIVYYELN…SPHNPISSVS (195 aa). Residue T322 is modified to Phosphothreonine; by MINK1, TNIK and MAP4K4. The segment at 418-428 is L3 loop; that stretch reads KGWGAEYHRQD. Residues S463 and S465 each carry the phosphoserine modification.

This sequence belongs to the dwarfin/SMAD family. Found in a complex with SMAD4 and YY1. Interacts with HGS, NANOG and ZCCHC12. Upon C-terminus phosphorylation: forms trimers with another SMAD1 and the co-SMAD SMAD4. Interacts with PEBP2-alpha subunit, CREB-binding protein (CBP), p300, SMURF1, SMURF2, USP15 and HOXC8. Associates with ZNF423 or ZNF521 in response to BMP2 leading to activate transcription of BMP target genes. Interacts with SKOR1. Interacts (via MH2 domain) with LEMD3. Binding to LEMD3 results in at least a partial reduction of receptor-mediated phosphorylation. Forms a ternary complex with PSMB4 and OAZ1 before PSMB4 is incorporated into the 20S proteasome. Interacts (via MH2 domain) with FAM83G (via MH2 domain); in a SMAD4-independent manner. Interacts with ZC3H3. Interacts with TMEM119. Interacts (via MH1 and MH2 domains) with ZNF8. Interacts with RANBP3L; the interaction increases when SMAD1 is not phosphorylated and mediates SMAD1 nuclear export. Interacts with EGR1; this interaction inhibits SMAD1 dephosphorylation. Interacts with SMAD6. Interacts with YAP1. Interacts with MTMR4; negatively regulates BMP signaling through SMAD1 dephosphorylation and retention in endosomes. In terms of processing, phosphorylation of the C-terminal SVS motif by BMP type 1 receptor kinase activates SMAD1 by promoting dissociation from the receptor and trimerization with SMAD4. Phosphorylation by ERK2 MAP kinase in response to EGF or HGF prevents SMAD1 nuclear accumulation and transcriptional activity in response to BMP. Dephosphorylation, probably by PPM1A, induces its export from the nucleus to the cytoplasm. Dephosphorylation is inhibited by association with EGR1. Phosphorylation by CDK8/9 creates binding sites for YAP1, and subsequent phosphorylation by GSK3 switches off YAP1 binding and adds binding sites for SMURF1. Ubiquitinated by SMAD-specific E3 ubiquitin ligase SMURF1, leading to its degradation. Monoubiquitinated, leading to prevent DNA-binding. Deubiquitination by USP15 alleviates inhibition and promotes activation of TGF-beta target genes. Dephosphorylation, probably by PPM1A, induces its export from the nucleus to the cytoplasm. Phospho-SMAD1 is ubiquitinated by CHIP leading to disruption of the SMAD1-SMAD4 complex. As to expression, ubiquitous. Highest expression seen in the heart and skeletal muscle.

The protein resides in the cytoplasm. It localises to the nucleus. Transcriptional modulator that plays a role in various cellular processes, including embryonic development, cell differentiation, and tissue homeostasis. Upon BMP ligand binding to their receptors at the cell surface, is phosphorylated by activated type I BMP receptors (BMPRIs) and associates with SMAD4 to form a heteromeric complex which translocates into the nucleus acting as transcription factor. In turn, the hetero-trimeric complex recognizes cis-regulatory elements containing Smad Binding Elements (SBEs) to modulate the outcome of the signaling network. SMAD1/OAZ1/PSMB4 complex mediates the degradation of the CREBBP/EP300 repressor SNIP1. Positively regulates BMP4-induced expression of odontogenic development regulator MSX1 following IPO7-mediated nuclear import. This is Mothers against decapentaplegic homolog 1 (SMAD1) from Homo sapiens (Human).